An 82-amino-acid polypeptide reads, in one-letter code: DNA-directed RNA polymerase subunit omega (82 aa).

Belongs to the RNA polymerase subunit omega family. In cyanobacteria the RNAP catalytic core is composed of 2 alpha, 1 beta, 1 beta', 1 gamma and 1 omega subunit. When a sigma factor is associated with the core the holoenzyme is formed, which can initiate transcription.

It carries out the reaction RNA(n) + a ribonucleoside 5'-triphosphate = RNA(n+1) + diphosphate. Its function is as follows. Promotes RNA polymerase assembly. Latches the N- and C-terminal regions of the beta' subunit thereby facilitating its interaction with the beta and alpha subunits. In Synechococcus sp. (strain CC9902), this protein is DNA-directed RNA polymerase subunit omega.